Consider the following 506-residue polypeptide: MDRVVAKIAKIRSQLTKLRSLFFLYFIYFLFFSFLGFLALKITKPRTTSRPHDFDLFFTSVSAITVSSMSTVDMEVFSNTQLIFLTILMFLGGEIFTSFLNLYVSYFTKFVFPHNKIRHILGSYNSDSSIEDRCDVETVTDYREGLIKIDERASKCLYSVVLSYHLVTNLVGSVLLLVYVNFVKTARDVLSSKEISPLTFSVFTTVSTFANCGFVPTNENMIIFRKNSGLIWLLIPQVLMGNTLFPCFLVLLIWGLYKITKRDEYGYILKNHNKMGYSHLLSVRLCVLLGVTVLGFLIIQLLFFCAFEWTSESLEGMSSYEKLVGSLFQVVNSRHTGETIVDLSTLSPAILVLFILMMYLPPYTLFMPLTEQKTIEKEGGDDDSENGKKVKKSGLIVSQLSFLTICIFLISITERQNLQRDPINFNVLNITLEVISAYGNVGFTTGYSCERRVDISDGGCKDASYGFAGRWSPMGKFVLIIVMFYGRFKQFTAKSGRAWILYPSSS.

Residues 1-19 lie on the Cytoplasmic side of the membrane; the sequence is MDRVVAKIAKIRSQLTKLR. Residues 20-40 form a helical membrane-spanning segment; it reads SLFFLYFIYFLFFSFLGFLAL. The Extracellular portion of the chain corresponds to 41 to 81; it reads KITKPRTTSRPHDFDLFFTSVSAITVSSMSTVDMEVFSNTQ. The helical transmembrane segment at 82–102 threads the bilayer; that stretch reads LIFLTILMFLGGEIFTSFLNL. The Cytoplasmic segment spans residues 103–159; it reads YVSYFTKFVFPHNKIRHILGSYNSDSSIEDRCDVETVTDYREGLIKIDERASKCLYS. A helical membrane pass occupies residues 160-180; sequence VVLSYHLVTNLVGSVLLLVYV. Topologically, residues 181–232 are extracellular; sequence NFVKTARDVLSSKEISPLTFSVFTTVSTFANCGFVPTNENMIIFRKNSGLIW. A helical membrane pass occupies residues 233–253; sequence LLIPQVLMGNTLFPCFLVLLI. The Cytoplasmic portion of the chain corresponds to 254–286; the sequence is WGLYKITKRDEYGYILKNHNKMGYSHLLSVRLC. A helical membrane pass occupies residues 287-307; that stretch reads VLLGVTVLGFLIIQLLFFCAF. Residues 308-348 lie on the Extracellular side of the membrane; sequence EWTSESLEGMSSYEKLVGSLFQVVNSRHTGETIVDLSTLSP. A helical transmembrane segment spans residues 349-369; it reads AILVLFILMMYLPPYTLFMPL. Over 370-392 the chain is Cytoplasmic; it reads TEQKTIEKEGGDDDSENGKKVKK. Residues 393 to 413 form a helical membrane-spanning segment; sequence SGLIVSQLSFLTICIFLISIT. Over 414–465 the chain is Extracellular; the sequence is ERQNLQRDPINFNVLNITLEVISAYGNVGFTTGYSCERRVDISDGGCKDASY. N429 is a glycosylation site (N-linked (GlcNAc...) asparagine). Residues 466-486 form a helical membrane-spanning segment; that stretch reads GFAGRWSPMGKFVLIIVMFYG. The Cytoplasmic portion of the chain corresponds to 487 to 506; sequence RFKQFTAKSGRAWILYPSSS.

It belongs to the TrkH potassium transport family. HKT (TC 2.A.38.3) subfamily. Post-translationally, N-glycosylated. Not essential for functional expression and membrane targeting. In terms of tissue distribution, highly expressed in roots. Expressed in flowers, leaves and stems. Expressed in the vascular tissues of every organs. In roots, leaves and flower peduncles, it is only expressed in the phloem tissues. Not expressed in root peripheral cells.

Its subcellular location is the cell membrane. It carries out the reaction Na(+)(in) = Na(+)(out). Sodium transporter protein, which plays a central role in plant tolerance to salt. Upon prolongated exposure to high concentrations, Na(+) translocates from the roots to the transpiring leaves where it can increase to toxic level. Involved in Na(+) recirculation from shoots to roots, probably by mediating Na(+) loading into the phloem sap in shoots and unloading in roots, thereby removing large amounts of Na(+) from the shoot. Does not transport K(+) but regulates K(+) nutrient status via its ability to facilitate Na(+) homeostasis. Probably not involved in root uptake of Na(+). In Arabidopsis thaliana (Mouse-ear cress), this protein is Sodium transporter HKT1 (HKT1).